A 355-amino-acid polypeptide reads, in one-letter code: UDP-N-acetylglucosamine--N-acetylmuramyl-(pentapeptide) pyrophosphoryl-undecaprenol N-acetylglucosamine transferase (355 aa).

Residues 13–15 (TGG), Asn125, Arg162, Ser190, Ile244, and Gln289 each bind UDP-N-acetyl-alpha-D-glucosamine.

It belongs to the glycosyltransferase 28 family. MurG subfamily.

The protein resides in the cell inner membrane. It carries out the reaction di-trans,octa-cis-undecaprenyl diphospho-N-acetyl-alpha-D-muramoyl-L-alanyl-D-glutamyl-meso-2,6-diaminopimeloyl-D-alanyl-D-alanine + UDP-N-acetyl-alpha-D-glucosamine = di-trans,octa-cis-undecaprenyl diphospho-[N-acetyl-alpha-D-glucosaminyl-(1-&gt;4)]-N-acetyl-alpha-D-muramoyl-L-alanyl-D-glutamyl-meso-2,6-diaminopimeloyl-D-alanyl-D-alanine + UDP + H(+). Its pathway is cell wall biogenesis; peptidoglycan biosynthesis. Functionally, cell wall formation. Catalyzes the transfer of a GlcNAc subunit on undecaprenyl-pyrophosphoryl-MurNAc-pentapeptide (lipid intermediate I) to form undecaprenyl-pyrophosphoryl-MurNAc-(pentapeptide)GlcNAc (lipid intermediate II). The polypeptide is UDP-N-acetylglucosamine--N-acetylmuramyl-(pentapeptide) pyrophosphoryl-undecaprenol N-acetylglucosamine transferase (Neisseria meningitidis serogroup C (strain 053442)).